The sequence spans 1372 residues: Capping protein, Arp2/3 and myosin-I linker protein 3 (1372 aa).

Residues 126-151 (RGNADTPEGPRDTSPNSETSTSTTHS) are disordered. Low complexity predominate over residues 138–151 (TSPNSETSTSTTHS). LRR repeat units follow at residues 244 to 264 (SLEE…QKLA), 274 to 295 (VLHA…SLSQ), 303 to 323 (GLTK…QALG), 335 to 357 (SLRY…NALY), 365 to 385 (ALVH…LGAL), 392 to 413 (HLTY…EAPP), 424 to 444 (TLSH…RALL), 455 to 475 (DLHL…ALQE), 482 to 501 (CVGS…LTLV), and 509 to 530 (SLKH…EEIL). Disordered regions lie at residues 865–900 (TLSD…ELGT), 970–1003 (KLRH…RQEN), and 1024–1372 (ESSS…PGTD). The span at 982–995 (PRTTPPGPGRPSMP) shows a compositional bias: pro residues. Positions 1040-1073 (SEAPLPPLQKKRRRGLFHFRRPRSFKGDRGPGSP) are necessary for localization at the cell membrane. The span at 1048–1063 (QKKRRRGLFHFRRPRS) shows a compositional bias: basic residues. Over residues 1079 to 1098 (LPPPPPPPPTQESPPSPDPP) the composition is skewed to pro residues. Low complexity predominate over residues 1099–1109 (SLGNNSSPCWS). Basic and acidic residues-rich tracts occupy residues 1163 to 1177 (ERAK…REGP) and 1219 to 1229 (RRAEATWHIAE). A compositionally biased stretch (polar residues) spans 1233–1244 (PNHSCQSPSPAS). Basic and acidic residues predominate over residues 1348–1361 (QSCDKLEPDRRRPP).

It belongs to the CARMIL family. Widely expressed, with much higher levels in fetal tissues than in adult ones. Up-regulated in certain cancer tissues.

Its subcellular location is the cytoplasm. It is found in the cell membrane. This is Capping protein, Arp2/3 and myosin-I linker protein 3 from Homo sapiens (Human).